The sequence spans 254 residues: MNLTDKTVLITGGASGIGYAAVQAFLNQQANVVVADIDEAQGEAMIRKENNDRLHFVQTDITNEPACQNAILSAVDKFGGLDVLINNAGIEIVAPIHEMELSDWNKVLNVNLTGMFLMSKHALKYMLKSGKGNIINTCSVGGVVAWPDIPAYNASKGGVLQTDAFYRPSIIAKHNIRVNCVCPGIIDTPLNEKSFLENNEGTLEEIKKEKAKVNPLLRLGKPEEIANVMLFLASDLSSYMTGSAITADGGYTAQ.

9–31 (LITGGASGIGYAAVQAFLNQQAN) serves as a coordination point for NAD(+). Ser-139 serves as a coordination point for substrate. The Proton acceptor role is filled by Tyr-152.

It belongs to the short-chain dehydrogenases/reductases (SDR) family.

The enzyme catalyses L-dihydroanticapsin + NAD(+) = L-anticapsin + NADH + H(+). The protein operates within antibiotic biosynthesis; bacilysin biosynthesis. Its function is as follows. Part of the bacABCDEFG operon responsible for the biosynthesis of bacilysin, an irreversible inactivator of the glutaminase domain of glucosamine synthetase. Catalyzes the dehydrogenation of the C7-hydroxyl group in the 4S-tetrahydrotyrosine (4S-H4Tyr) to yield anticapsin (epoxycyclohexanonyl-Ala). This is Dihydroanticapsin 7-dehydrogenase from Bacillus amyloliquefaciens (Bacillus velezensis).